The primary structure comprises 480 residues: Bifunctional pantoate ligase/cytidylate kinase (480 aa).

Positions 1–243 (MPTMGGLHQG…CGTTRLIDHV (243 aa)) are pantoate--beta-alanine ligase. 4-11 (MGGLHQGH) serves as a coordination point for ATP. Residue His-11 is the Proton donor of the active site. Gln-34 contributes to the (R)-pantoate binding site. Gln-34 contributes to the beta-alanine binding site. 123-126 (GEKD) contributes to the ATP binding site. Gln-129 is a (R)-pantoate binding site. ATP is bound by residues Val-152 and 160 to 163 (LSSR). The cytidylate kinase stretch occupies residues 244–480 (FLMTRQPLVA…GEEAWPTPAG (237 aa)).

This sequence in the N-terminal section; belongs to the pantothenate synthetase family. It in the C-terminal section; belongs to the cytidylate kinase family. Type 1 subfamily.

The protein resides in the cytoplasm. The enzyme catalyses (R)-pantoate + beta-alanine + ATP = (R)-pantothenate + AMP + diphosphate + H(+). It carries out the reaction CMP + ATP = CDP + ADP. The catalysed reaction is dCMP + ATP = dCDP + ADP. It functions in the pathway cofactor biosynthesis; (R)-pantothenate biosynthesis; (R)-pantothenate from (R)-pantoate and beta-alanine: step 1/1. Functionally, catalyzes the condensation of pantoate with beta-alanine in an ATP-dependent reaction via a pantoyl-adenylate intermediate. Catalyzes the transfer of a phosphate group from ATP to either CMP or dCMP to form CDP or dCDP and ADP, respectively. The sequence is that of Bifunctional pantoate ligase/cytidylate kinase from Synechococcus sp. (strain CC9605).